The sequence spans 364 residues: DNA replication and repair protein RecF (364 aa).

Residue 30–37 participates in ATP binding; the sequence is GNNAQGKT.

This sequence belongs to the RecF family.

It localises to the cytoplasm. Functionally, the RecF protein is involved in DNA metabolism; it is required for DNA replication and normal SOS inducibility. RecF binds preferentially to single-stranded, linear DNA. It also seems to bind ATP. The sequence is that of DNA replication and repair protein RecF from Clostridium botulinum (strain Okra / Type B1).